The primary structure comprises 122 residues: UPF0102 protein Atu0303 (122 aa).

Belongs to the UPF0102 family.

This chain is UPF0102 protein Atu0303, found in Agrobacterium fabrum (strain C58 / ATCC 33970) (Agrobacterium tumefaciens (strain C58)).